Here is a 393-residue protein sequence, read N- to C-terminus: Arginine biosynthesis bifunctional protein ArgJ (393 aa).

Positions 142, 168, 179, 265, 388, and 393 each coordinate substrate. Catalysis depends on T179, which acts as the Nucleophile.

It belongs to the ArgJ family. Heterotetramer of two alpha and two beta chains.

It is found in the cytoplasm. The enzyme catalyses N(2)-acetyl-L-ornithine + L-glutamate = N-acetyl-L-glutamate + L-ornithine. It catalyses the reaction L-glutamate + acetyl-CoA = N-acetyl-L-glutamate + CoA + H(+). Its pathway is amino-acid biosynthesis; L-arginine biosynthesis; L-ornithine and N-acetyl-L-glutamate from L-glutamate and N(2)-acetyl-L-ornithine (cyclic): step 1/1. It functions in the pathway amino-acid biosynthesis; L-arginine biosynthesis; N(2)-acetyl-L-ornithine from L-glutamate: step 1/4. Catalyzes two activities which are involved in the cyclic version of arginine biosynthesis: the synthesis of N-acetylglutamate from glutamate and acetyl-CoA as the acetyl donor, and of ornithine by transacetylation between N(2)-acetylornithine and glutamate. The polypeptide is Arginine biosynthesis bifunctional protein ArgJ (Geobacter sulfurreducens (strain ATCC 51573 / DSM 12127 / PCA)).